The sequence spans 325 residues: Forkhead box protein B1 (325 aa).

A DNA-binding region (fork-head) is located at residues 12–103; sequence QKPPYSYISL…GDMFENGSFL (92 aa). A compositionally biased stretch (low complexity) spans 284–309; sequence LSNSPPSLSPTSSQTATSQSSPATPS. A disordered region spans residues 284–325; sequence LSNSPPSLSPTSSQTATSQSSPATPSETLTSPASALHSVAVH.

The protein resides in the nucleus. In terms of biological role, transcription factor expressed by neural progenitor cells in specific regions of the embryonic neuroepithelium. Essential for the mammillary nuclei maintenance. Negatively regulates the proliferation of oligodendrocyte progenitors and promotes oligodendrocyte maturation. Also expressed in mammary glands, plays a role in lactation, controls development of mammary glands and the inferior colliculi of the midbrain in the central nervous system that regulates the milk-ejection reflex. The polypeptide is Forkhead box protein B1 (FOXB1) (Homo sapiens (Human)).